The sequence spans 262 residues: Acyl-[acyl-carrier-protein]--UDP-N-acetylglucosamine O-acyltransferase (262 aa).

It belongs to the transferase hexapeptide repeat family. LpxA subfamily. Homotrimer.

The protein localises to the cytoplasm. The catalysed reaction is a (3R)-hydroxyacyl-[ACP] + UDP-N-acetyl-alpha-D-glucosamine = a UDP-3-O-[(3R)-3-hydroxyacyl]-N-acetyl-alpha-D-glucosamine + holo-[ACP]. The protein operates within glycolipid biosynthesis; lipid IV(A) biosynthesis; lipid IV(A) from (3R)-3-hydroxytetradecanoyl-[acyl-carrier-protein] and UDP-N-acetyl-alpha-D-glucosamine: step 1/6. In terms of biological role, involved in the biosynthesis of lipid A, a phosphorylated glycolipid that anchors the lipopolysaccharide to the outer membrane of the cell. The polypeptide is Acyl-[acyl-carrier-protein]--UDP-N-acetylglucosamine O-acyltransferase (Burkholderia vietnamiensis (strain G4 / LMG 22486) (Burkholderia cepacia (strain R1808))).